Consider the following 510-residue polypeptide: ETS translocation variant 5 (510 aa).

Positions 131-208 (FKPLTPPTTP…QPLQMPKMMP (78 aa)) are disordered. The span at 161 to 174 (GHAPAAGPVQGVGP) shows a compositional bias: low complexity. Pro residues predominate over residues 175–185 (APAPHSLPEPG). Serine 248 is modified (phosphoserine). A Glycyl lysine isopeptide (Lys-Gly) (interchain with G-Cter in SUMO2) cross-link involves residue lysine 350. Positions 368–448 (LQLWQFLVTL…AGERYVYKFV (81 aa)) form a DNA-binding region, ETS.

As to quaternary structure, interacts (via C-terminal) with ZMYM5 (via N-terminal 120 amino acid region). Ubiquitous.

Its subcellular location is the nucleus. In terms of biological role, binds to DNA sequences containing the consensus nucleotide core sequence 5'-GGAA.-3'. The chain is ETS translocation variant 5 (ETV5) from Homo sapiens (Human).